The chain runs to 299 residues: MYDILPPELWIKIVDYSGEINLLLTSINFFELFNLVDVKVNVIEYIIENELIDVLKHIVVLKNLKHPIMGKNIISIESLNKCLLDSCNKGQLKIVQHLINIGANIESNNNYAVLLASGGGHLEVVKYLVSQGANIKSKNNRVVGWASQHGRLEVVKYLVSLGADIRSNDDYAVRWASEHGHLEVAKYLVSLGADIRSKYYYILCGASQNGYLEIIKYIVSLGADIRAYNNCAVKWASQCGHIDIVKYLASQGADIRNDNDYCVGLASKNGHIEVVKYLVSQGADIKTYNDHAVKVASKK.

ANK repeat units lie at residues 78–107 (SLNK…NIES), 108–137 (NNNY…NIKS), 139–167 (NNRV…DIRS), 168–197 (NDDY…DIRS), 199–227 (YYYI…DIRA), 228–257 (YNNC…DIRN), and 258–287 (DNDY…DIKT).

The chain is Putative ankyrin repeat protein R864 from Acanthamoeba polyphaga mimivirus (APMV).